The following is a 1342-amino-acid chain: DNA-directed RNA polymerase subunit beta (1342 aa).

2 positions are modified to N6-acetyllysine: Lys-1022 and Lys-1200.

This sequence belongs to the RNA polymerase beta chain family. As to quaternary structure, the RNAP catalytic core consists of 2 alpha, 1 beta, 1 beta' and 1 omega subunit. When a sigma factor is associated with the core the holoenzyme is formed, which can initiate transcription.

It catalyses the reaction RNA(n) + a ribonucleoside 5'-triphosphate = RNA(n+1) + diphosphate. Its function is as follows. DNA-dependent RNA polymerase catalyzes the transcription of DNA into RNA using the four ribonucleoside triphosphates as substrates. This is DNA-directed RNA polymerase subunit beta from Shigella dysenteriae serotype 1 (strain Sd197).